Consider the following 123-residue polypeptide: UPF0738 protein BcerKBAB4_1107 (123 aa).

This sequence belongs to the UPF0738 family.

The sequence is that of UPF0738 protein BcerKBAB4_1107 from Bacillus mycoides (strain KBAB4) (Bacillus weihenstephanensis).